We begin with the raw amino-acid sequence, 62 residues long: Alpha-elapitoxin-Nn2a (62 aa).

Residues 1-20 (LECHNQQSSQTPTTTDCSGG) are disordered. Cystine bridges form between C3–C24, C17–C41, C43–C54, and C55–C60.

Belongs to the three-finger toxin family. Short-chain subfamily. Type I alpha-neurotoxin sub-subfamily. In terms of tissue distribution, expressed by the venom gland.

Its subcellular location is the secreted. Its function is as follows. Nicotinic acetylcholine receptor antagonist. Binds to muscle nicotinic acetylcholine receptor (nAChR) and inhibits acetylcholine from binding to the receptor, thereby impairing neuromuscular transmission. Produces peripheral paralysis by blocking neuromuscular transmission at the postsynaptic site. Induces concentration-dependent inhibition of indirect twitches and abolishes contractile responses of tissues to exogenous acetylcholine and carbachol, in the chick biventer cervicis nerve-muscle preparation at 100-300 nM (in vitro). Prior incubation of tissues with Indian polyvalent antivenom (1 ml/0.6 mg) prevents the neurotoxic effects at 100 nM (in vitro). Addition of Indian polyvalent antivenom (1 ml/0.6 mg) at the t90 time point does not reverse the neurotoxic effects (in vitro). Displays non-competitive antagonism of concentration-response curves to carbachol, with a pA2 of 8.01 (in vitro). The protein is Alpha-elapitoxin-Nn2a of Naja naja (Indian cobra).